Reading from the N-terminus, the 214-residue chain is Adenylate kinase (214 aa).

10–15 is a binding site for ATP; that stretch reads GAGKGT. Positions 30–59 are NMP; it reads STGDMLRAAVKAGTPLGLEAKKVMDAGQLV. Residues Thr31, Arg36, 57–59, 85–88, and Gln92 contribute to the AMP site; these read QLV and GFPR. The segment at 122 to 159 is LID; it reads GRRVHPGSGRVYHVVFNPPKVEGKDDVTGEDLAIRPDD. Residues Arg123 and 132–133 each bind ATP; that span reads VY. AMP-binding residues include Arg156 and Arg167. Gln200 serves as a coordination point for ATP.

The protein belongs to the adenylate kinase family. Monomer.

It is found in the cytoplasm. It catalyses the reaction AMP + ATP = 2 ADP. Its pathway is purine metabolism; AMP biosynthesis via salvage pathway; AMP from ADP: step 1/1. Its function is as follows. Catalyzes the reversible transfer of the terminal phosphate group between ATP and AMP. Plays an important role in cellular energy homeostasis and in adenine nucleotide metabolism. The chain is Adenylate kinase from Shewanella baltica (strain OS155 / ATCC BAA-1091).